Here is a 78-residue protein sequence, read N- to C-terminus: Translational regulator CsrA (78 aa).

Belongs to the CsrA/RsmA family. In terms of assembly, homodimer; the beta-strands of each monomer intercalate to form a hydrophobic core, while the alpha-helices form wings that extend away from the core.

It is found in the cytoplasm. Functionally, a translational regulator that binds mRNA to regulate translation initiation and/or mRNA stability. Usually binds in the 5'-UTR at or near the Shine-Dalgarno sequence preventing ribosome-binding, thus repressing translation. Its main target seems to be the major flagellin gene, while its function is anatagonized by FliW. This chain is Translational regulator CsrA, found in Borrelia turicatae (strain 91E135).